The chain runs to 369 residues: Small ribosomal subunit biogenesis GTPase RsgA (369 aa).

The 159-residue stretch at 88–246 (RTVLERPPVA…LADTPGFNQP (159 aa)) folds into the CP-type G domain. GTP-binding positions include 137–140 (NKQD) and 188–196 (GPSGVGKSS). Residues C271, C276, H278, and C284 each coordinate Zn(2+). A disordered region spans residues 307–369 (QNPENSRETD…DLDNLQEDWE (63 aa)). Positions 359–369 (TDLDNLQEDWE) are enriched in acidic residues.

Belongs to the TRAFAC class YlqF/YawG GTPase family. RsgA subfamily. In terms of assembly, monomer. Associates with 30S ribosomal subunit, binds 16S rRNA. Zn(2+) is required as a cofactor.

It is found in the cytoplasm. In terms of biological role, one of several proteins that assist in the late maturation steps of the functional core of the 30S ribosomal subunit. Helps release RbfA from mature subunits. May play a role in the assembly of ribosomal proteins into the subunit. Circularly permuted GTPase that catalyzes slow GTP hydrolysis, GTPase activity is stimulated by the 30S ribosomal subunit. The chain is Small ribosomal subunit biogenesis GTPase RsgA from Synechocystis sp. (strain ATCC 27184 / PCC 6803 / Kazusa).